The sequence spans 122 residues: Large ribosomal subunit protein uL14 (122 aa).

The protein belongs to the universal ribosomal protein uL14 family. As to quaternary structure, part of the 50S ribosomal subunit. Forms a cluster with proteins L3 and L19. In the 70S ribosome, L14 and L19 interact and together make contacts with the 16S rRNA in bridges B5 and B8.

In terms of biological role, binds to 23S rRNA. Forms part of two intersubunit bridges in the 70S ribosome. The chain is Large ribosomal subunit protein uL14 from Borreliella burgdorferi (strain ZS7) (Borrelia burgdorferi).